The sequence spans 327 residues: GTPase Obg (327 aa).

The Obg domain maps to 1 to 159; the sequence is MQFIDQANII…WEVQLELKLL (159 aa). Positions 160–327 constitute an OBG-type G domain; the sequence is AEVGIIGLPN…SLLSEVWKRI (168 aa). ATP contacts are provided by residues 166–173, 191–195, 213–216, 280–283, and 309–311; these read GLPNAGKS, FTTLI, DIPG, NKME, and SSS. Residues Ser173 and Thr193 each coordinate Mg(2+).

This sequence belongs to the TRAFAC class OBG-HflX-like GTPase superfamily. OBG GTPase family. As to quaternary structure, monomer. Requires Mg(2+) as cofactor.

It localises to the cytoplasm. An essential GTPase which binds GTP, GDP and possibly (p)ppGpp with moderate affinity, with high nucleotide exchange rates and a fairly low GTP hydrolysis rate. Plays a role in control of the cell cycle, stress response, ribosome biogenesis and in those bacteria that undergo differentiation, in morphogenesis control. This Prochlorococcus marinus (strain MIT 9215) protein is GTPase Obg.